We begin with the raw amino-acid sequence, 955 residues long: 2-oxoglutarate dehydrogenase E1 component (955 aa).

It belongs to the alpha-ketoglutarate dehydrogenase family. Homodimer. Part of the 2-oxoglutarate dehydrogenase (OGDH) complex composed of E1 (2-oxoglutarate dehydrogenase), E2 (dihydrolipoamide succinyltransferase) and E3 (dihydrolipoamide dehydrogenase); the complex contains multiple copies of the three enzymatic components (E1, E2 and E3). Requires thiamine diphosphate as cofactor.

It carries out the reaction N(6)-[(R)-lipoyl]-L-lysyl-[protein] + 2-oxoglutarate + H(+) = N(6)-[(R)-S(8)-succinyldihydrolipoyl]-L-lysyl-[protein] + CO2. Its function is as follows. E1 component of the 2-oxoglutarate dehydrogenase (OGDH) complex which catalyzes the decarboxylation of 2-oxoglutarate, the first step in the conversion of 2-oxoglutarate to succinyl-CoA and CO(2). In Bacillus cereus (strain AH187), this protein is 2-oxoglutarate dehydrogenase E1 component.